The chain runs to 294 residues: Acetylglutamate kinase (294 aa).

Residues 63-64 (GG), arginine 85, and asparagine 188 contribute to the substrate site.

Belongs to the acetylglutamate kinase family. ArgB subfamily.

The protein localises to the cytoplasm. It carries out the reaction N-acetyl-L-glutamate + ATP = N-acetyl-L-glutamyl 5-phosphate + ADP. It functions in the pathway amino-acid biosynthesis; L-arginine biosynthesis; N(2)-acetyl-L-ornithine from L-glutamate: step 2/4. Functionally, catalyzes the ATP-dependent phosphorylation of N-acetyl-L-glutamate. The sequence is that of Acetylglutamate kinase from Methanococcus maripaludis (strain C6 / ATCC BAA-1332).